The following is a 292-amino-acid chain: ATP synthase gamma chain (292 aa).

Belongs to the ATPase gamma chain family. F-type ATPases have 2 components, CF(1) - the catalytic core - and CF(0) - the membrane proton channel. CF(1) has five subunits: alpha(3), beta(3), gamma(1), delta(1), epsilon(1). CF(0) has three main subunits: a, b and c.

Its subcellular location is the cell inner membrane. In terms of biological role, produces ATP from ADP in the presence of a proton gradient across the membrane. The gamma chain is believed to be important in regulating ATPase activity and the flow of protons through the CF(0) complex. The polypeptide is ATP synthase gamma chain (Brucella abortus (strain S19)).